A 346-amino-acid chain; its full sequence is Ribosomal RNA small subunit methyltransferase H (346 aa).

Residues 47 to 49 (GGY), aspartate 65, phenylalanine 92, aspartate 113, and glutamine 120 contribute to the S-adenosyl-L-methionine site. A compositionally biased stretch (basic and acidic residues) spans 270–279 (RGEAPSRRLP). Residues 270–346 (RGEAPSRRLP…ALPQRAAKGR (77 aa)) are disordered.

Belongs to the methyltransferase superfamily. RsmH family.

The protein localises to the cytoplasm. The catalysed reaction is cytidine(1402) in 16S rRNA + S-adenosyl-L-methionine = N(4)-methylcytidine(1402) in 16S rRNA + S-adenosyl-L-homocysteine + H(+). Its function is as follows. Specifically methylates the N4 position of cytidine in position 1402 (C1402) of 16S rRNA. The polypeptide is Ribosomal RNA small subunit methyltransferase H (Methylocella silvestris (strain DSM 15510 / CIP 108128 / LMG 27833 / NCIMB 13906 / BL2)).